A 1222-amino-acid polypeptide reads, in one-letter code: A disintegrin and metalloproteinase with thrombospondin motifs 16 (1222 aa).

The first 20 residues, 1-20 (MESRGCAALWVLLLAQVSEQ), serve as a signal peptide directing secretion. Positions 21–277 (QTPACALGLA…EYKPSSRHKR (257 aa)) are excised as a propeptide. 2 N-linked (GlcNAc...) asparagine glycosylation sites follow: Asn154 and Asn190. The Cysteine switch motif lies at 245–253 (HFCGRRKKY). Cys247 lines the Zn(2+) pocket. The Peptidase M12B domain maps to 288–493 (LNVETLVVVD…AQAICLADQP (206 aa)). N-linked (GlcNAc...) asparagine glycosylation is present at Asn308. Disulfide bonds link Cys364–Cys415, Cys390–Cys397, Cys409–Cys488, Cys448–Cys472, Cys516–Cys541, Cys527–Cys548, Cys536–Cys567, Cys561–Cys572, Cys596–Cys633, Cys600–Cys638, and Cys611–Cys623. His431 is a binding site for Zn(2+). Residue Glu432 is part of the active site. Zn(2+)-binding residues include His435 and His441. The Disintegrin domain maps to 494–583 (KPVKEYKYPE…KYGDEGPKPT (90 aa)). The region spanning 584–639 (HGHWSDWSPWSPCSRTCGGGISHRDRLCTNPRPSHGGKFCQGSTRTLKLCNSQRCP) is the TSP type-1 1 domain. N-linked (GlcNAc...) asparagine glycosylation is found at Asn739, Asn778, Asn825, Asn833, Asn903, and Asn933. The spacer stretch occupies residues 745–871 (THRGLYSKHH…KTPAAQPSYS (127 aa)). 5 consecutive TSP type-1 domains span residues 872–920 (WAIV…LVPC), 925–985 (CPSS…QSCP), 986–1046 (PAWS…KRCH), 1049–1113 (KKLQ…IPCP), and 1125–1179 (RGSW…HFCP). The region spanning 1184–1221 (RGTFCKDLFHWCYLVPQHGMCGHRFYSKQCCNTCSKSN) is the PLAC domain.

Zn(2+) serves as cofactor. In terms of processing, the precursor is cleaved by a furin endopeptidase. Glycosylated. Can be O-fucosylated by POFUT2 on a serine or a threonine residue found within the consensus sequence C1-X(2)-(S/T)-C2-G of the TSP type-1 repeat domains where C1 and C2 are the first and second cysteine residue of the repeat, respectively. Fucosylated repeats can then be further glycosylated by the addition of a beta-1,3-glucose residue by the glucosyltransferase, B3GALTL. Fucosylation mediates the efficient secretion of ADAMTS family members. Can also be C-glycosylated with one or two mannose molecules on tryptophan residues within the consensus sequence W-X-X-W of the TPRs, and N-glycosylated. These other glycosylations can also facilitate secretion.

It is found in the secreted. The protein resides in the extracellular space. The protein localises to the extracellular matrix. This Mus musculus (Mouse) protein is A disintegrin and metalloproteinase with thrombospondin motifs 16 (Adamts16).